A 206-amino-acid chain; its full sequence is Large ribosomal subunit protein uL4 (206 aa).

Positions 49 to 79 are disordered; it reads KVKTRSEISRTTKKMYKQKGTGNARHGAASA.

Belongs to the universal ribosomal protein uL4 family. As to quaternary structure, part of the 50S ribosomal subunit.

In terms of biological role, one of the primary rRNA binding proteins, this protein initially binds near the 5'-end of the 23S rRNA. It is important during the early stages of 50S assembly. It makes multiple contacts with different domains of the 23S rRNA in the assembled 50S subunit and ribosome. Its function is as follows. Forms part of the polypeptide exit tunnel. The protein is Large ribosomal subunit protein uL4 of Methylobacterium sp. (strain 4-46).